The primary structure comprises 97 residues: Cell division topological specificity factor (97 aa).

This sequence belongs to the MinE family.

Functionally, prevents the cell division inhibition by proteins MinC and MinD at internal division sites while permitting inhibition at polar sites. This ensures cell division at the proper site by restricting the formation of a division septum at the midpoint of the long axis of the cell. In Rhodospirillum centenum (strain ATCC 51521 / SW), this protein is Cell division topological specificity factor.